Consider the following 201-residue polypeptide: Beta-lactamase inhibitory protein (201 aa).

An N-terminal signal peptide occupies residues 1-36 (MRTVGIGAGVRRLGRAVVMAAAVGGLVLGSAGASNA). A run of 2 repeats spans residues 37–112 (AGVM…EKLL) and 116–201 (APTL…WDLV). Disulfide bonds link cysteine 66/cysteine 78 and cysteine 145/cysteine 167.

Interacts with E.coli beta-lactamase TEM-1; interaction inhibits hydrolysis of beta-lactam antibiotics. Interacts with K.pneumoniae beta-lactamase SHV-1. Interacts with K.pneumoniae beta-lactamases KPC-2 and KPC-3; interaction inhibits hydrolysis of beta-lactam antibiotics. Interacts with E.coli beta-lactamases CTX-M-14 and CTX-M-15; interaction inhibits hydrolysis of beta-lactam antibiotics.

The protein localises to the secreted. Functionally, inhibits a wide variety of beta lactamases. This chain is Beta-lactamase inhibitory protein, found in Streptomyces clavuligerus.